Reading from the N-terminus, the 333-residue chain is Cytosolic Fe-S cluster assembly factor NBP35 (333 aa).

[4Fe-4S] cluster is bound by residues Cys32, Cys46, Cys49, and Cys55. 85–92 (GKGGVGKS) is an ATP binding site. The [4Fe-4S] cluster site is built by Cys258 and Cys261.

The protein belongs to the Mrp/NBP35 ATP-binding proteins family. NUBP1/NBP35 subfamily. Heterotetramer of 2 NBP35 and 2 CFD1 chains. Requires [4Fe-4S] cluster as cofactor.

The protein localises to the cytoplasm. The protein resides in the nucleus. Functionally, component of the cytosolic iron-sulfur (Fe/S) protein assembly (CIA) machinery. Required for maturation of extramitochondrial Fe-S proteins. The NBP35-CFD1 heterotetramer forms a Fe-S scaffold complex, mediating the de novo assembly of an Fe-S cluster and its transfer to target apoproteins. Required for biogenesis and export of both ribosomal subunits, which may reflect a role in assembly of the Fe/S clusters in RLI1, a protein which performs rRNA processing and ribosome export. In Eremothecium gossypii (strain ATCC 10895 / CBS 109.51 / FGSC 9923 / NRRL Y-1056) (Yeast), this protein is Cytosolic Fe-S cluster assembly factor NBP35.